The following is a 220-amino-acid chain: Cytidylate kinase (220 aa).

10–18 serves as a coordination point for ATP; it reads GPASSGKST.

It belongs to the cytidylate kinase family. Type 1 subfamily.

It is found in the cytoplasm. The enzyme catalyses CMP + ATP = CDP + ADP. The catalysed reaction is dCMP + ATP = dCDP + ADP. The sequence is that of Cytidylate kinase from Lactococcus lactis subsp. lactis (strain IL1403) (Streptococcus lactis).